Here is a 112-residue protein sequence, read N- to C-terminus: Putative pterin-4-alpha-carbinolamine dehydratase (112 aa).

This sequence belongs to the pterin-4-alpha-carbinolamine dehydratase family.

The catalysed reaction is (4aS,6R)-4a-hydroxy-L-erythro-5,6,7,8-tetrahydrobiopterin = (6R)-L-erythro-6,7-dihydrobiopterin + H2O. The sequence is that of Putative pterin-4-alpha-carbinolamine dehydratase from Shewanella baltica (strain OS223).